The chain runs to 428 residues: MPSIDVVVAREILDSRGNPTVEVEVGLDDGSTGRAAVPSGASTGAFEAIELRDGDPNRYQGKGVEKAVLAVIEQIGPELVGYDATEQRLIDQAMFDLDATDNKGSLGANAILGVSLAVAHAASEASDLPLFRYLGGPNAHLLPVPMMNILNGGSHADSNVDIQEFMIAPIGAESFSEALRWGAEVYHTLKKVLKTKGLSTGLGDEGGFAPNLESNRAALDLIIEAIKQAGYIPGEQIALALDVAASEFYKDGKYEFEGKSRSAAEMTEYYEELVSAYPLVSIEDPLYEDDWAGWKVITDKLGDKVQIVGDDLFVTNPERLARGIEEGSANALLVKVNQIGSLTETLDAVELAQRNGFKCMMSHRSGETEDVTIADLAVAVNCGQIKTGAPARSDRVAKYNQLLRIEEILDDAAEYAGRSAFPRFRSAN.

Glutamine 163 is a (2R)-2-phosphoglycerate binding site. Glutamate 205 functions as the Proton donor in the catalytic mechanism. Aspartate 242, glutamate 283, and aspartate 310 together coordinate Mg(2+). Residues lysine 335, arginine 364, serine 365, and lysine 386 each contribute to the (2R)-2-phosphoglycerate site. The active-site Proton acceptor is lysine 335.

The protein belongs to the enolase family. Mg(2+) serves as cofactor.

It is found in the cytoplasm. Its subcellular location is the secreted. The protein localises to the cell surface. It catalyses the reaction (2R)-2-phosphoglycerate = phosphoenolpyruvate + H2O. It participates in carbohydrate degradation; glycolysis; pyruvate from D-glyceraldehyde 3-phosphate: step 4/5. Functionally, catalyzes the reversible conversion of 2-phosphoglycerate (2-PG) into phosphoenolpyruvate (PEP). It is essential for the degradation of carbohydrates via glycolysis. In Streptomyces avermitilis (strain ATCC 31267 / DSM 46492 / JCM 5070 / NBRC 14893 / NCIMB 12804 / NRRL 8165 / MA-4680), this protein is Enolase.